Here is a 555-residue protein sequence, read N- to C-terminus: Glutamine--tRNA ligase (555 aa).

The 'HIGH' region motif lies at 34–44 (PEPNGYLHIGH). ATP contacts are provided by residues 35–37 (EPN) and 41–47 (HIGHAKS). The L-glutamine site is built by aspartate 67 and tyrosine 212. ATP is bound by residues threonine 231, 261–262 (RL), and 269–271 (MSK). Positions 268 to 272 (VMSKR) match the 'KMSKS' region motif.

The protein belongs to the class-I aminoacyl-tRNA synthetase family. As to quaternary structure, monomer.

The protein localises to the cytoplasm. The enzyme catalyses tRNA(Gln) + L-glutamine + ATP = L-glutaminyl-tRNA(Gln) + AMP + diphosphate. This is Glutamine--tRNA ligase from Cronobacter sakazakii (strain ATCC BAA-894) (Enterobacter sakazakii).